A 251-amino-acid chain; its full sequence is CDP-diacylglycerol pyrophosphatase (251 aa).

Residues 4–24 (AGLLFLVMIVIAVVASGIGYW) traverse the membrane as a helical segment.

This sequence belongs to the Cdh family.

It is found in the cell inner membrane. It carries out the reaction a CDP-1,2-diacyl-sn-glycerol + H2O = a 1,2-diacyl-sn-glycero-3-phosphate + CMP + 2 H(+). Its pathway is phospholipid metabolism; CDP-diacylglycerol degradation; phosphatidate from CDP-diacylglycerol: step 1/1. The protein is CDP-diacylglycerol pyrophosphatase of Escherichia coli O8 (strain IAI1).